Reading from the N-terminus, the 498-residue chain is ATP synthase subunit beta, chloroplastic (498 aa).

ATP is bound at residue 172 to 179 (GGAGVGKT).

Belongs to the ATPase alpha/beta chains family. In terms of assembly, F-type ATPases have 2 components, CF(1) - the catalytic core - and CF(0) - the membrane proton channel. CF(1) has five subunits: alpha(3), beta(3), gamma(1), delta(1), epsilon(1). CF(0) has four main subunits: a(1), b(1), b'(1) and c(9-12).

It localises to the plastid. Its subcellular location is the chloroplast thylakoid membrane. The catalysed reaction is ATP + H2O + 4 H(+)(in) = ADP + phosphate + 5 H(+)(out). Its function is as follows. Produces ATP from ADP in the presence of a proton gradient across the membrane. The catalytic sites are hosted primarily by the beta subunits. This is ATP synthase subunit beta, chloroplastic from Populus trichocarpa (Western balsam poplar).